The primary structure comprises 82 residues: Probable glutamyl-tRNA(Gln) amidotransferase subunit C (82 aa).

Belongs to the GatC family. Heterotrimer of A, B and C subunits.

It catalyses the reaction L-glutamyl-tRNA(Gln) + L-glutamine + ATP + H2O = L-glutaminyl-tRNA(Gln) + L-glutamate + ADP + phosphate + H(+). It carries out the reaction L-aspartyl-tRNA(Asn) + L-glutamine + ATP + H2O = L-asparaginyl-tRNA(Asn) + L-glutamate + ADP + phosphate + 2 H(+). Its function is as follows. Allows the formation of correctly charged Asn-tRNA(Asn) or Gln-tRNA(Gln) through the transamidation of misacylated Asp-tRNA(Asn) or Glu-tRNA(Gln) in organisms which lack either or both of asparaginyl-tRNA or glutaminyl-tRNA synthetases. The reaction takes place in the presence of glutamine and ATP through an activated phospho-Asp-tRNA(Asn) or phospho-Glu-tRNA(Gln). The sequence is that of Probable glutamyl-tRNA(Gln) amidotransferase subunit C from Methanocaldococcus jannaschii (strain ATCC 43067 / DSM 2661 / JAL-1 / JCM 10045 / NBRC 100440) (Methanococcus jannaschii).